The chain runs to 458 residues: Dynein regulatory complex protein 10 (458 aa).

Coiled coils occupy residues 96–137, 209–255, and 285–379; these read GQTL…HKVN, IQDI…KNHL, and QVRL…IRAE. Positions 397–426 constitute an IQ domain; the sequence is MVRAATLIQAVWKGYLVRSILRSKKKKRGK. The interval 419–458 is disordered; that stretch reads SKKKKRGKGKGKDKGKGKEKPKEEKAKEKKPKAKGKGKKK. Over residues 428-445 the composition is skewed to basic and acidic residues; the sequence is KGKDKGKGKEKPKEEKAK. Over residues 446–458 the composition is skewed to basic residues; the sequence is EKKPKAKGKGKKK.

This sequence belongs to the DRC10 family. Component of the nexin-dynein regulatory complex (N-DRC). Interacts with CFAP52.

The protein resides in the cytoplasm. It is found in the cytoskeleton. Its subcellular location is the flagellum axoneme. Functionally, component of the nexin-dynein regulatory complex (N-DRC), a key regulator of ciliary/flagellar motility which maintains the alignment and integrity of the distal axoneme and regulates microtubule sliding in motile axonemes. The chain is Dynein regulatory complex protein 10 (Iqcd) from Mus musculus (Mouse).